The chain runs to 816 residues: Leucine--tRNA ligase (816 aa).

The short motif at 40 to 51 (PYPSGSGLHVGH) is the 'HIGH' region element. Residues 576–580 (KMSKS) carry the 'KMSKS' region motif. Lys579 is an ATP binding site.

The protein belongs to the class-I aminoacyl-tRNA synthetase family.

It is found in the cytoplasm. It catalyses the reaction tRNA(Leu) + L-leucine + ATP = L-leucyl-tRNA(Leu) + AMP + diphosphate. In Chlorobium phaeobacteroides (strain DSM 266 / SMG 266 / 2430), this protein is Leucine--tRNA ligase.